A 338-amino-acid polypeptide reads, in one-letter code: Acetylcholinesterase (338 aa).

Asn8 carries an N-linked (GlcNAc...) asparagine glycan. The active-site Acyl-ester intermediate is Ser99. Cys153 and Cys164 form a disulfide bridge. The Charge relay system role is filled by Glu226.

It belongs to the type-B carboxylesterase/lipase family.

It localises to the synapse. The protein localises to the secreted. It is found in the cell membrane. The catalysed reaction is acetylcholine + H2O = choline + acetate + H(+). Functionally, terminates signal transduction at the neuromuscular junction by rapid hydrolysis of the acetylcholine released into the synaptic cleft. The polypeptide is Acetylcholinesterase (ache) (Myxine glutinosa (Atlantic hagfish)).